The chain runs to 336 residues: Retinol dehydrogenase 10-B (336 aa).

Residues 7–27 (LFVVTFKIIWSFVLAGAKWFI) traverse the membrane as a helical; Signal-anchor segment. Residue 40–64 (VITGAGSGLGRLFALEFARRRATLV) participates in NADP(+) binding. Serine 192 is a substrate binding site. Tyrosine 205 (proton acceptor) is an active-site residue.

This sequence belongs to the short-chain dehydrogenases/reductases (SDR) family.

The protein localises to the microsome membrane. It is found in the endoplasmic reticulum membrane. It carries out the reaction all-trans-retinol + NADP(+) = all-trans-retinal + NADPH + H(+). It participates in cofactor metabolism; retinol metabolism. In terms of biological role, retinol dehydrogenase with a clear preference for NADP. Converts all-trans-retinol to all-trans-retinal. Has no detectable activity towards 11-cis-retinol, 9-cis-retinol and 13-cis-retinol. The polypeptide is Retinol dehydrogenase 10-B (rdh10b) (Danio rerio (Zebrafish)).